Consider the following 401-residue polypeptide: Glutamyl-tRNA reductase (401 aa).

Residues 45-48 (TCNR), S101, 106-108 (EDQ), and Q112 contribute to the substrate site. The active-site Nucleophile is the C46. 177 to 182 (GYGDVG) serves as a coordination point for NADP(+).

It belongs to the glutamyl-tRNA reductase family. Homodimer.

It catalyses the reaction (S)-4-amino-5-oxopentanoate + tRNA(Glu) + NADP(+) = L-glutamyl-tRNA(Glu) + NADPH + H(+). It functions in the pathway porphyrin-containing compound metabolism; protoporphyrin-IX biosynthesis; 5-aminolevulinate from L-glutamyl-tRNA(Glu): step 1/2. In terms of biological role, catalyzes the NADPH-dependent reduction of glutamyl-tRNA(Glu) to glutamate 1-semialdehyde (GSA). The protein is Glutamyl-tRNA reductase of Clostridium botulinum (strain Alaska E43 / Type E3).